A 510-amino-acid polypeptide reads, in one-letter code: Glycogen synthase (510 aa).

Lys-18 lines the ADP-alpha-D-glucose pocket.

This sequence belongs to the glycosyltransferase 1 family. Bacterial/plant glycogen synthase subfamily.

It catalyses the reaction [(1-&gt;4)-alpha-D-glucosyl](n) + ADP-alpha-D-glucose = [(1-&gt;4)-alpha-D-glucosyl](n+1) + ADP + H(+). The protein operates within glycan biosynthesis; glycogen biosynthesis. Synthesizes alpha-1,4-glucan chains using ADP-glucose. The chain is Glycogen synthase from Bordetella parapertussis (strain 12822 / ATCC BAA-587 / NCTC 13253).